The following is a 443-amino-acid chain: MPMYEDRIDLYGADGKLLEEDVPLEAISPLKNPTIANLVSDVKRSVAVNLAGIEGSLRKAALGGKSNFIPGREVELPIVENAEAIAEKVKKLVQTSEDDDTNIRLINNGQQILVQVPTTRMGVAADYTVSALVTGAAVVQAIIDEFDVDMFDANAVKTAVMGRYPQTVDFTGANLSTLLGPPVLLEGLGYGLRNIMANHVVAITRKNTLNASALSSILEQTAMFETGDAVGAFERMHLLGLAYQGLNANNLLFDLVKENGKGTVGTVIASLVERAVEDGVVKVAREMNSGYKVYEPADWALWNAYAATGLLAATIVNVGAARAAQGVASTVLYYNDILEYETGLPGVDFGRAMGTAVGFSFFSHSIYGGGGPGIFHGNHVVTRHSKGFALPCVAAAMCLDAGTQMFSVEKTSGLIGSVYSEIDYFREPIVNVAKGAAEVKDQL.

Position 367 (Y367) interacts with coenzyme M. A coenzyme B-binding site is contributed by G369.

It belongs to the methyl-coenzyme M reductase beta subunit family. As to quaternary structure, MCR is a hexamer of two alpha, two beta, and two gamma chains, forming a dimer of heterotrimers. Coenzyme F430 is required as a cofactor.

The catalysed reaction is coenzyme B + methyl-coenzyme M = methane + coenzyme M-coenzyme B heterodisulfide. It participates in one-carbon metabolism; methyl-coenzyme M reduction; methane from methyl-coenzyme M: step 1/1. Component of the methyl-coenzyme M reductase (MCR) I that catalyzes the reductive cleavage of methyl-coenzyme M (CoM-S-CH3 or 2-(methylthio)ethanesulfonate) using coenzyme B (CoB or 7-mercaptoheptanoylthreonine phosphate) as reductant which results in the production of methane and the mixed heterodisulfide of CoB and CoM (CoM-S-S-CoB). This is the final step in methanogenesis. The sequence is that of Methyl-coenzyme M reductase II subunit beta from Methanothermobacter marburgensis (strain ATCC BAA-927 / DSM 2133 / JCM 14651 / NBRC 100331 / OCM 82 / Marburg) (Methanobacterium thermoautotrophicum).